The chain runs to 143 residues: Hemoglobin subunit alpha-A (143 aa).

The Globin domain maps to 2–143; that stretch reads SLSGKDKSVV…LALALAERYR (142 aa). An O2-binding site is contributed by His60. Heme b is bound at residue His89.

It belongs to the globin family. Heterotetramer of two alpha chains and two beta chains. As to expression, red blood cells.

Functionally, involved in oxygen transport from gills to the various peripheral tissues. In Seriola quinqueradiata (Five-ray yellowtail), this protein is Hemoglobin subunit alpha-A (hbaa).